The sequence spans 252 residues: Ubiquinone biosynthesis O-methyltransferase (252 aa).

Residues Arg-41, Gly-72, Asp-93, and Met-136 each contribute to the S-adenosyl-L-methionine site.

Belongs to the methyltransferase superfamily. UbiG/COQ3 family.

It carries out the reaction a 3-demethylubiquinol + S-adenosyl-L-methionine = a ubiquinol + S-adenosyl-L-homocysteine + H(+). The enzyme catalyses a 3-(all-trans-polyprenyl)benzene-1,2-diol + S-adenosyl-L-methionine = a 2-methoxy-6-(all-trans-polyprenyl)phenol + S-adenosyl-L-homocysteine + H(+). It participates in cofactor biosynthesis; ubiquinone biosynthesis. Its function is as follows. O-methyltransferase that catalyzes the 2 O-methylation steps in the ubiquinone biosynthetic pathway. The chain is Ubiquinone biosynthesis O-methyltransferase from Rhizobium leguminosarum bv. trifolii (strain WSM2304).